A 375-amino-acid chain; its full sequence is Probable butyrate kinase 2 (375 aa).

This sequence belongs to the acetokinase family.

The protein resides in the cytoplasm. It carries out the reaction butanoate + ATP = butanoyl phosphate + ADP. The sequence is that of Probable butyrate kinase 2 from Thermotoga maritima (strain ATCC 43589 / DSM 3109 / JCM 10099 / NBRC 100826 / MSB8).